The chain runs to 275 residues: Polyamine aminopropyltransferase (275 aa).

The PABS domain maps to 2 to 235; the sequence is DLWLREGQIE…GFWSFTIGSK (234 aa). Position 31 (Gln-31) interacts with S-methyl-5'-thioadenosine. Spermidine contacts are provided by His-62 and Asp-86. Residues Glu-106 and 137–138 each bind S-methyl-5'-thioadenosine; that span reads DG. Catalysis depends on Asp-155, which acts as the Proton acceptor. 155–158 provides a ligand contact to spermidine; sequence DSTD.

Belongs to the spermidine/spermine synthase family. Homodimer or homotetramer.

The protein resides in the cytoplasm. The enzyme catalyses S-adenosyl 3-(methylsulfanyl)propylamine + putrescine = S-methyl-5'-thioadenosine + spermidine + H(+). It functions in the pathway amine and polyamine biosynthesis; spermidine biosynthesis; spermidine from putrescine: step 1/1. Catalyzes the irreversible transfer of a propylamine group from the amino donor S-adenosylmethioninamine (decarboxy-AdoMet) to putrescine (1,4-diaminobutane) to yield spermidine. The protein is Polyamine aminopropyltransferase of Clostridium kluyveri (strain NBRC 12016).